The sequence spans 481 residues: 2-succinylbenzoate--CoA ligase (481 aa).

This sequence belongs to the ATP-dependent AMP-binding enzyme family. MenE subfamily.

The catalysed reaction is 2-succinylbenzoate + ATP + CoA = 2-succinylbenzoyl-CoA + AMP + diphosphate. Its pathway is quinol/quinone metabolism; 1,4-dihydroxy-2-naphthoate biosynthesis; 1,4-dihydroxy-2-naphthoate from chorismate: step 5/7. It participates in quinol/quinone metabolism; menaquinone biosynthesis. Converts 2-succinylbenzoate (OSB) to 2-succinylbenzoyl-CoA (OSB-CoA). This is 2-succinylbenzoate--CoA ligase from Bacillus mycoides (strain KBAB4) (Bacillus weihenstephanensis).